The primary structure comprises 236 residues: MTKKVWKFYGIALLAVVIDQVLKLWVYFNMQMGTLGQIKLLGNWFKLFYTLNPGMAFGIQFGFTYDKVLLTIIRIIATSMIIKYIWNLAKETNSSKWLLWGWSLILGGAAGNGIDSIFYGKILHNAPYGAPMSWFYGQVIDMLYIDLWSGRLPDWVPWYSGYYVTCLPVFNLADVAILAGVALIVLDKRASIQQPVQKYEATEVTDSELLETRHELVDPITEHNNTEHNHPEVEDK.

The next 4 helical transmembrane spans lie at 8–28 (FYGI…WVYF), 44–64 (WFKL…FGFT), 68–88 (VLLT…IWNL), and 98–118 (LLWG…DSIF). Active-site residues include aspartate 141 and aspartate 174. A helical transmembrane segment spans residues 166 to 186 (CLPVFNLADVAILAGVALIVL).

Belongs to the peptidase A8 family.

The protein resides in the cell inner membrane. It catalyses the reaction Release of signal peptides from bacterial membrane prolipoproteins. Hydrolyzes -Xaa-Yaa-Zaa-|-(S,diacylglyceryl)Cys-, in which Xaa is hydrophobic (preferably Leu), and Yaa (Ala or Ser) and Zaa (Gly or Ala) have small, neutral side chains.. It participates in protein modification; lipoprotein biosynthesis (signal peptide cleavage). Functionally, this protein specifically catalyzes the removal of signal peptides from prolipoproteins. The chain is Lipoprotein signal peptidase from Amoebophilus asiaticus (strain 5a2).